The following is a 199-amino-acid chain: Ion-translocating oxidoreductase complex subunit A (199 aa).

A run of 6 helical transmembrane segments spans residues Leu8–Gly28, Val49–Val69, Phe75–Ile95, Ser106–Leu126, Val138–Ile158, and Ala178–Leu198.

Belongs to the NqrDE/RnfAE family. As to quaternary structure, the Rnf complex is probably composed of eight subunits, including RnfA, RnfB, RnfC, RnfD, RnfE and RnfG.

Its subcellular location is the cell membrane. Part of a membrane-bound complex that couples electron transfer with translocation of ions across the membrane. Catalyzes Na(+) transport, most probably coupled to electron transfer from reduced ferredoxin to methanophenazine and heterodisulfide reductase. Involved in heterodisulfide reduction during methanogenesis from acetate. This chain is Ion-translocating oxidoreductase complex subunit A, found in Methanosarcina acetivorans (strain ATCC 35395 / DSM 2834 / JCM 12185 / C2A).